The primary structure comprises 664 residues: Acetolactate synthase 2, chloroplastic (664 aa).

The segment covering 1 to 34 (MAAAAAAPSPSFSKTLSSSSSKSSTLLPRSTFPF) has biased composition (low complexity). A disordered region spans residues 1 to 51 (MAAAAAAPSPSFSKTLSSSSSKSSTLLPRSTFPFPHHPHKTTPPPLHLTPT). A chloroplast-targeting transit peptide spans 1–91 (MAAAAAAPSP…VSRFAPDEPR (91 aa)). Thiamine diphosphate is bound at residue glutamate 138. An intrachain disulfide couples cysteine 158 to cysteine 304. FAD-binding positions include arginine 240, 346–367 (HGTV…FGVR), and 389–408 (DIDS…ICAD). A thiamine pyrophosphate binding region spans residues 481 to 561 (QHQMWAAQYY…VKIMLLNNQH (81 aa)). Mg(2+)-binding residues include aspartate 532 and asparagine 559.

This sequence belongs to the TPP enzyme family. Mg(2+) is required as a cofactor. Thiamine diphosphate serves as cofactor.

Its subcellular location is the plastid. The protein localises to the chloroplast. The enzyme catalyses 2 pyruvate + H(+) = (2S)-2-acetolactate + CO2. The protein operates within amino-acid biosynthesis; L-isoleucine biosynthesis; L-isoleucine from 2-oxobutanoate: step 1/4. It participates in amino-acid biosynthesis; L-valine biosynthesis; L-valine from pyruvate: step 1/4. The protein is Acetolactate synthase 2, chloroplastic (ALS SURB) of Nicotiana tabacum (Common tobacco).